The primary structure comprises 343 residues: Glyceraldehyde-3-phosphate dehydrogenase (343 aa).

NAD(+)-binding positions include 13–14 and Gly111; that span reads TI. 140 to 142 contacts D-glyceraldehyde 3-phosphate; that stretch reads SCN. Residue Cys141 is the Nucleophile of the active site. Arg169 contributes to the NAD(+) binding site. Residue 195–196 coordinates D-glyceraldehyde 3-phosphate; sequence HA. Residue Gln302 coordinates NAD(+).

Belongs to the glyceraldehyde-3-phosphate dehydrogenase family. Homotetramer.

It is found in the cytoplasm. The catalysed reaction is D-glyceraldehyde 3-phosphate + phosphate + NADP(+) = (2R)-3-phospho-glyceroyl phosphate + NADPH + H(+). It catalyses the reaction D-glyceraldehyde 3-phosphate + phosphate + NAD(+) = (2R)-3-phospho-glyceroyl phosphate + NADH + H(+). It participates in carbohydrate degradation; glycolysis; pyruvate from D-glyceraldehyde 3-phosphate: step 1/5. This is Glyceraldehyde-3-phosphate dehydrogenase from Hyperthermus butylicus (strain DSM 5456 / JCM 9403 / PLM1-5).